The chain runs to 1210 residues: Multimerin-1 (1210 aa).

The first 19 residues, 1–19 (MLGLKFLVLLSILWGRVFR), serve as a signal peptide directing secretion. The interval 57–102 (ATQNPSTQGPAAAERSSEDDVLLQSTSQPSETSTPPEGRHQTPLEK) is disordered. The span at 80 to 92 (QSTSQPSETSTPP) shows a compositional bias: low complexity. N-linked (GlcNAc...) asparagine glycosylation occurs at N133. Residues 143–155 (SRKSDQQEVSTKS) show a composition bias toward polar residues. Residues 143 to 190 (SRKSDQQEVSTKSAGDMGNRSARETHLRRSDNSRNQRPSYQKPSFETT) are disordered. A glycan (N-linked (GlcNAc...) asparagine) is linked at N161. The segment covering 163–176 (SARETHLRRSDNSR) has biased composition (basic and acidic residues). Over residues 177–189 (NQRPSYQKPSFET) the composition is skewed to polar residues. The EMI domain occupies 192 to 267 (GKNWCAHVHT…PGYIGPNCQL (76 aa)). 3 disulfide bridges follow: C196–C257, C222–C230, and C256–C265. T201 carries O-linked (Fuc) threonine glycosylation. O-linked (Fuc) threonine glycosylation is present at T250. Residues 276-299 (AHSNQAESHTAVDQGRAQQQKQDC) are disordered. The stretch at 303 to 338 (AMIQKLAEQLSQQERKLSLLQKKVDNASLVADDMRN) forms a coiled coil. 14 N-linked (GlcNAc...) asparagine glycosylation sites follow: N328, N415, N491, N525, N560, N602, N712, N765, N810, N822, N903, N915, N963, and N1000. Residues 564–690 (LLEMEKESAR…RHNLLRNEVQ (127 aa)) are a coiled coil. The stretch at 809-846 (FNETTSQVNKCQQNMSHLEENMLSVTKTAKEFETRLQG) forms a coiled coil. An EGF-like domain is found at 1023–1059 (EHSSCSSFPCQNGGTCISGRSNFICACRHPFMGDTCT). 3 disulfide bridges follow: C1027-C1038, C1032-C1047, and C1049-C1058. Residue T1037 is glycosylated (O-linked (Fuc) threonine). The C1q domain occupies 1078 to 1210 (RYAPMVAFFV…TFSGYLLYRT (133 aa)).

Multimeric. Composed of varying sized, disulfide-linked multimers, the smallest of which is a homotrimer. Proteolysis of the promultimerin in the N-terminal region, leads to the mature p155 form that is stored in platelets. Interacts with factor V/Va. Extensively N-glycosylated. Post-translationally, O-fucosylated within the EMI domain (at Thr-201 and Thr-250) by FUT10/POFUT3 and FUT11/POFUT4. O-fucosylation at Thr-201 and Thr-1037 are required for facilitating protein folding and secretion.

It is found in the secreted. Its function is as follows. Carrier protein for platelet (but not plasma) factor V/Va. Plays a role in the storage and stabilization of factor V in platelets. Upon release following platelet activation, may limit platelet and plasma factor Va-dependent thrombin generation. Ligand for integrin alpha-IIb/beta-3 and integrin alpha-V/beta-3 on activated platelets, and may function as an extracellular matrix or adhesive protein. The chain is Multimerin-1 from Mus musculus (Mouse).